The primary structure comprises 310 residues: tRNA dimethylallyltransferase (310 aa).

10 to 17 contributes to the ATP binding site; it reads GPTAVGKS. 12-17 lines the substrate pocket; it reads TAVGKS. The tract at residues 35–38 is interaction with substrate tRNA; sequence DSMQ.

It belongs to the IPP transferase family. Monomer. Mg(2+) serves as cofactor.

The catalysed reaction is adenosine(37) in tRNA + dimethylallyl diphosphate = N(6)-dimethylallyladenosine(37) in tRNA + diphosphate. Catalyzes the transfer of a dimethylallyl group onto the adenine at position 37 in tRNAs that read codons beginning with uridine, leading to the formation of N6-(dimethylallyl)adenosine (i(6)A). The chain is tRNA dimethylallyltransferase from Clostridium perfringens (strain SM101 / Type A).